Here is a 234-residue protein sequence, read N- to C-terminus: Uridylate kinase (234 aa).

9 to 10 (GS) is an ATP binding site. UMP is bound at residue G43. Residues G44 and R48 each coordinate ATP. UMP contacts are provided by residues D65 and 113–119 (VIPGQTT). T139, Y145, and D148 together coordinate ATP.

Belongs to the UMP kinase family. In terms of assembly, homohexamer.

It localises to the cytoplasm. It carries out the reaction UMP + ATP = UDP + ADP. It functions in the pathway pyrimidine metabolism; CTP biosynthesis via de novo pathway; UDP from UMP (UMPK route): step 1/1. With respect to regulation, inhibited by UTP. Functionally, catalyzes the reversible phosphorylation of UMP to UDP. This Methanococcoides burtonii (strain DSM 6242 / NBRC 107633 / OCM 468 / ACE-M) protein is Uridylate kinase.